A 471-amino-acid chain; its full sequence is Metal tolerance protein C1 (471 aa).

Residues methionine 1–arginine 78 lie on the Cytoplasmic side of the membrane. A helical transmembrane segment spans residues leucine 79–glycine 99. At serine 100–threonine 101 the chain is on the vacuolar side. A helical membrane pass occupies residues alanine 102–valine 122. The Cytoplasmic portion of the chain corresponds to serine 123–threonine 144. Residues leucine 145–alanine 165 form a helical membrane-spanning segment. Residues leucine 166–histidine 192 are Vacuolar-facing. A helical transmembrane segment spans residues proline 193–isoleucine 213. Residues threonine 214–aspartate 236 are Cytoplasmic-facing. The chain crosses the membrane as a helical span at residues alanine 237–leucine 257. Over aspartate 258–lysine 423 the chain is Vacuolar. Residues isoleucine 424–alanine 444 traverse the membrane as a helical segment. At alanine 445–glutamate 471 the chain is on the cytoplasmic side.

This sequence belongs to the cation diffusion facilitator (CDF) transporter (TC 2.A.4) family.

Its subcellular location is the vacuole membrane. Functionally, involved in sequestration of excess metal in the cytoplasm into vacuoles to maintain metal homeostasis. This is Metal tolerance protein C1 (MTPC1) from Arabidopsis thaliana (Mouse-ear cress).